We begin with the raw amino-acid sequence, 117 residues long: Protein RALF-like 32 (117 aa).

An N-terminal signal peptide occupies residues 1–26 (MEIKPSRIFSTITIFFLCLLLAHVTS). The propeptide at 27–64 (KASSSSLCNGSVAECSSMVETEEMSVIMESWSSQRLTE) is removed in mature form. A glycan (N-linked (GlcNAc...) asparagine) is linked at Asn-35. Residues 77–107 (RNQPACDGGKRGESYSTQCLPPPSNPYSRGC) form a disordered region. 2 cysteine pairs are disulfide-bonded: Cys-82-Cys-95 and Cys-107-Cys-113.

Belongs to the plant rapid alkalinization factor (RALF) family. In terms of processing, proteolytically cleaved, probably by S1P, a subtilisin-like serine protease (subtilase).

The protein localises to the secreted. Functionally, cell signaling peptide that may regulate plant stress, growth, and development. Mediates a rapid alkalinization of extracellular space by mediating a transient increase in the cytoplasmic Ca(2+) concentration leading to a calcium-dependent signaling events through a cell surface receptor and a concomitant activation of some intracellular mitogen-activated protein kinases. The sequence is that of Protein RALF-like 32 (RALFL32) from Arabidopsis thaliana (Mouse-ear cress).